We begin with the raw amino-acid sequence, 118 residues long: Large ribosomal subunit protein uL22 (118 aa).

It belongs to the universal ribosomal protein uL22 family. In terms of assembly, part of the 50S ribosomal subunit.

This protein binds specifically to 23S rRNA; its binding is stimulated by other ribosomal proteins, e.g. L4, L17, and L20. It is important during the early stages of 50S assembly. It makes multiple contacts with different domains of the 23S rRNA in the assembled 50S subunit and ribosome. Its function is as follows. The globular domain of the protein is located near the polypeptide exit tunnel on the outside of the subunit, while an extended beta-hairpin is found that lines the wall of the exit tunnel in the center of the 70S ribosome. This chain is Large ribosomal subunit protein uL22, found in Nostoc punctiforme (strain ATCC 29133 / PCC 73102).